The primary structure comprises 105 residues: DNA-binding protein HU (105 aa).

This sequence belongs to the bacterial histone-like protein family.

Functionally, histone-like DNA-binding protein which is capable of wrapping DNA to stabilize it, and thus to prevent its denaturation under extreme environmental conditions. This chain is DNA-binding protein HU (hup), found in Treponema pallidum (strain Nichols).